The sequence spans 443 residues: MKLDSFMVTRRGNPELVAPARATPRGTKPLSDLDDDWDLRYLQPCLEFFRAVDDGERRKPARPGDAIRAALAEALVYYYPIAGRLRELPKGGRLAVECTGEGVVFVEAEADVRIEDLGEPPLPTFRGAESFLCDVGDAGVVVGRPLFYMQITHLKCGGFVLGTHICHCIADAFGTLQFLKAIVDIARGEAKPTTLPVWEREHFVATSLPPNIKEEQEKLFDELENTTCDDIMVTMPAENMVSEYFTISQRDMIALRRHVPFNLTKTVTSFELLTAVLWRSRTMALGYKPCQIVRLMITVNARGRWKKLPLGYYGNGLLCPVIEITVNDLCTNSLGHTIELVRKAKHEMKTKENMQLMVDLLPLWREKPYIKVERIFETCDIKWIGQDTLDIGWAKRIGGGIPTVSLPDMTSYQFMCKNEKGDHILVFHTTNAVMHLPLVIKRK.

Residues H167 and D390 each act as proton acceptor in the active site.

It belongs to the plant acyltransferase family.

Functionally, hydroxycinnamoyl transferase that catalyzes the transfer of an acyl from p-coumaryol-CoA to spermidine, to produce coumaroyl spermidine. Can use feruloyl-CoA as acyl donor. Contributes to the natural variation of spermidine-based phenolamides in rice cultivars. The protein is Spermidine hydroxycinnamoyltransferase 1 of Oryza sativa subsp. japonica (Rice).